The following is a 61-amino-acid chain: MAFLKKSLFLVLFLGVVSLSFCEEEEREEHEEEKREAEAAESAENLISKRVPPGFTPFRVD.

An N-terminal signal peptide occupies residues 1-22 (MAFLKKSLFLVLFLGVVSLSFC). Residues 23-48 (EEEEREEHEEEKREAEAAESAENLIS) constitute a propeptide that is removed on maturation. The tract at residues 27 to 61 (REEHEEEKREAEAAESAENLISKRVPPGFTPFRVD) is disordered.

In terms of tissue distribution, expressed by the skin glands. Expression levels in inguinal glands and granular glands are virtually the same.

It localises to the secreted. Functionally, induces contraction of rat ileum smooth muscle (EC(50)=2.73 uM) but has no activity towards rat smooth muscle from tail artery, urinary bladder or uterus. Binds to both bradykinin receptor B1 (BDKRB1) and B2 (BDKRB2); the effect via BDKRB1 is stronger. This Physalaemus nattereri (Cuyaba dwarf frog) protein is [Val1,Thr6]-bradykinyl-Val,Asp.